The primary structure comprises 176 residues: RNA pyrophosphohydrolase (176 aa).

The Nudix hydrolase domain maps to 6–149 (GYRPNVGIII…KRNVYEMALT (144 aa)). Positions 38–59 (GGIKPGESPEAAMYRELMEEVG) match the Nudix box motif.

Belongs to the Nudix hydrolase family. RppH subfamily. A divalent metal cation serves as cofactor.

In terms of biological role, accelerates the degradation of transcripts by removing pyrophosphate from the 5'-end of triphosphorylated RNA, leading to a more labile monophosphorylated state that can stimulate subsequent ribonuclease cleavage. The polypeptide is RNA pyrophosphohydrolase (Laribacter hongkongensis (strain HLHK9)).